We begin with the raw amino-acid sequence, 423 residues long: Gamma-glutamyl phosphate reductase (423 aa).

The protein belongs to the gamma-glutamyl phosphate reductase family.

Its subcellular location is the cytoplasm. The enzyme catalyses L-glutamate 5-semialdehyde + phosphate + NADP(+) = L-glutamyl 5-phosphate + NADPH + H(+). Its pathway is amino-acid biosynthesis; L-proline biosynthesis; L-glutamate 5-semialdehyde from L-glutamate: step 2/2. Its function is as follows. Catalyzes the NADPH-dependent reduction of L-glutamate 5-phosphate into L-glutamate 5-semialdehyde and phosphate. The product spontaneously undergoes cyclization to form 1-pyrroline-5-carboxylate. The sequence is that of Gamma-glutamyl phosphate reductase from Pseudomonas putida (strain ATCC 700007 / DSM 6899 / JCM 31910 / BCRC 17059 / LMG 24140 / F1).